We begin with the raw amino-acid sequence, 585 residues long: Glutamate decarboxylase 2 (585 aa).

The segment at 1 to 24 (MASPGSGFWSFGSEDGSGDPENSG) is disordered. A phosphoserine mark is found at Ser-3, Ser-6, Ser-10, and Ser-13. 2 S-palmitoyl cysteine lipidation sites follow: Cys-30 and Cys-45. 181-183 (QLS) serves as a coordination point for substrate. Lys-396 is subject to N6-(pyridoxal phosphate)lysine. Residue Arg-558 coordinates substrate.

It belongs to the group II decarboxylase family. Homodimer. Requires pyridoxal 5'-phosphate as cofactor. In terms of processing, phosphorylated; which does not affect kinetic parameters or subcellular location. Palmitoylated; which is required for presynaptic clustering.

The protein resides in the cytoplasm. The protein localises to the cytosol. It localises to the cytoplasmic vesicle. Its subcellular location is the presynaptic cell membrane. It is found in the golgi apparatus membrane. It carries out the reaction L-glutamate + H(+) = 4-aminobutanoate + CO2. In terms of biological role, catalyzes the production of GABA. The sequence is that of Glutamate decarboxylase 2 (GAD2) from Sus scrofa (Pig).